The primary structure comprises 263 residues: Ycf3-interacting protein 1, chloroplastic (263 aa).

A chloroplast-targeting transit peptide spans 1–71; sequence MASNMLQLSL…VNKEEDSATY (71 aa). The chain crosses the membrane as a helical span at residues 238 to 258; that stretch reads ALYLVSAFPIIIGISVVLILF.

Belongs to the Y3IP1/CEST family. As to quaternary structure, interacts with Ycf3.

It localises to the plastid. The protein resides in the chloroplast thylakoid membrane. Its function is as follows. Nuclear genome-encoded factor that participates in photosystem I (PSI) biogenesis. Cooperates with the plastid genome-encoded protein PSI assembly Ycf3 in the assembly of stable PSI units in the thylakoid membrane. The chain is Ycf3-interacting protein 1, chloroplastic from Nicotiana tabacum (Common tobacco).